The following is a 348-amino-acid chain: Benzoate 1,2-dioxygenase electron transfer component (348 aa).

Residues 14 to 109 (HQVALQFEDG…DAVFQIQASS (96 aa)) enclose the 2Fe-2S ferredoxin-type domain. C51, C56, C59, and C93 together coordinate [2Fe-2S] cluster. Residues 111 to 348 (VCKTKIHHFE…NFLFEKFSAN (238 aa)) are ferredoxin-reductase. The 102-residue stretch at 116 to 217 (IHHFEGTLAR…TGPFGSFYLR (102 aa)) folds into the FAD-binding FR-type domain.

The protein belongs to the bacterial ring-hydroxylating dioxygenase ferredoxin reductase family. In terms of assembly, this dioxygenase system consists of three proteins: the two subunits of the hydroxylase component (BenA and BenB), and an electron transfer component (BenC). FAD serves as cofactor. [2Fe-2S] cluster is required as a cofactor.

It carries out the reaction 2 reduced [2Fe-2S]-[ferredoxin] + NAD(+) + H(+) = 2 oxidized [2Fe-2S]-[ferredoxin] + NADH. Its pathway is xenobiotic degradation; toluene degradation. Its function is as follows. Electron transfer component of benzoate 1,2-dioxygenase system. This Acinetobacter baylyi (strain ATCC 33305 / BD413 / ADP1) protein is Benzoate 1,2-dioxygenase electron transfer component (benC).